A 464-amino-acid chain; its full sequence is ATP synthase subunit beta (464 aa).

ATP is bound at residue 153–160 (GGAGVGKT).

It belongs to the ATPase alpha/beta chains family. In terms of assembly, F-type ATPases have 2 components, CF(1) - the catalytic core - and CF(0) - the membrane proton channel. CF(1) has five subunits: alpha(3), beta(3), gamma(1), delta(1), epsilon(1). CF(0) has three main subunits: a(1), b(2) and c(9-12). The alpha and beta chains form an alternating ring which encloses part of the gamma chain. CF(1) is attached to CF(0) by a central stalk formed by the gamma and epsilon chains, while a peripheral stalk is formed by the delta and b chains.

It localises to the cell membrane. The enzyme catalyses ATP + H2O + 4 H(+)(in) = ADP + phosphate + 5 H(+)(out). In terms of biological role, produces ATP from ADP in the presence of a proton gradient across the membrane. The catalytic sites are hosted primarily by the beta subunits. This chain is ATP synthase subunit beta, found in Alkaliphilus metalliredigens (strain QYMF).